The following is a 233-amino-acid chain: Small ribosomal subunit protein uS2 (233 aa).

It belongs to the universal ribosomal protein uS2 family.

This Clostridium botulinum (strain Hall / ATCC 3502 / NCTC 13319 / Type A) protein is Small ribosomal subunit protein uS2.